The chain runs to 347 residues: Protein RecA (347 aa).

Residue 66 to 73 participates in ATP binding; that stretch reads GPESSGKT.

Belongs to the RecA family.

It localises to the cytoplasm. Can catalyze the hydrolysis of ATP in the presence of single-stranded DNA, the ATP-dependent uptake of single-stranded DNA by duplex DNA, and the ATP-dependent hybridization of homologous single-stranded DNAs. It interacts with LexA causing its activation and leading to its autocatalytic cleavage. The sequence is that of Protein RecA from Allochromatium vinosum (Chromatium vinosum).